The following is a 467-amino-acid chain: Xanthan biosynthesis protein XanB (467 aa).

This sequence belongs to the mannose-6-phosphate isomerase type 2 family.

The catalysed reaction is D-mannose 6-phosphate = D-fructose 6-phosphate. The enzyme catalyses alpha-D-mannose 1-phosphate + GTP + H(+) = GDP-alpha-D-mannose + diphosphate. Its pathway is nucleotide-sugar biosynthesis; GDP-alpha-D-mannose biosynthesis; GDP-alpha-D-mannose from alpha-D-mannose 1-phosphate (GTP route): step 1/1. The protein operates within nucleotide-sugar biosynthesis; GDP-alpha-D-mannose biosynthesis; alpha-D-mannose 1-phosphate from D-fructose 6-phosphate: step 1/2. Its function is as follows. Involved in xanthan production. The sequence is that of Xanthan biosynthesis protein XanB (xanB) from Xanthomonas campestris pv. campestris (strain B100).